The chain runs to 476 residues: Inosine-5'-monophosphate dehydrogenase (476 aa).

CBS domains follow at residues 93–151 and 152–211; these read IIRD…VKDI and MTKD…TRDE. NAD(+) contacts are provided by residues D242 and 292-294; that span reads GIG. 2 residues coordinate K(+): G294 and G296. S297 is an IMP binding site. K(+) is bound at residue C299. C299 acts as the Thioimidate intermediate in catalysis. Residues 334–336, 357–358, and 381–385 contribute to the IMP site; these read DGG, GY, and YRGMG. The active-site Proton acceptor is the R398. E408 contributes to the IMP binding site. K(+) is bound at residue E462.

It belongs to the IMPDH/GMPR family. Homotetramer. Requires K(+) as cofactor.

The enzyme catalyses IMP + NAD(+) + H2O = XMP + NADH + H(+). Its pathway is purine metabolism; XMP biosynthesis via de novo pathway; XMP from IMP: step 1/1. With respect to regulation, mycophenolic acid (MPA) is a non-competitive inhibitor that prevents formation of the closed enzyme conformation by binding to the same site as the amobile flap. In contrast, mizoribine monophosphate (MZP) is a competitive inhibitor that induces the closed conformation. MPA is a potent inhibitor of mammalian IMPDHs but a poor inhibitor of the bacterial enzymes. MZP is a more potent inhibitor of bacterial IMPDH. Catalyzes the conversion of inosine 5'-phosphate (IMP) to xanthosine 5'-phosphate (XMP), the first committed and rate-limiting step in the de novo synthesis of guanine nucleotides, and therefore plays an important role in the regulation of cell growth. The sequence is that of Inosine-5'-monophosphate dehydrogenase from Korarchaeum cryptofilum (strain OPF8).